The primary structure comprises 181 residues: Large ribosomal subunit protein uL16 (181 aa).

This sequence belongs to the universal ribosomal protein uL16 family.

The polypeptide is Large ribosomal subunit protein uL16 (Pyrococcus horikoshii (strain ATCC 700860 / DSM 12428 / JCM 9974 / NBRC 100139 / OT-3)).